Here is a 131-residue protein sequence, read N- to C-terminus: Profilin-6 (131 aa).

Cys-13 and Cys-115 are joined by a disulfide. The Involved in PIP2 interaction motif lies at 81 to 97 (VVIRGKKGAGGITIKKT). Phosphothreonine is present on Thr-111.

It belongs to the profilin family. Occurs in many kinds of cells as a complex with monomeric actin in a 1:1 ratio. In terms of processing, phosphorylated by MAP kinases.

It is found in the cytoplasm. Its subcellular location is the cytoskeleton. In terms of biological role, binds to actin and affects the structure of the cytoskeleton. At high concentrations, profilin prevents the polymerization of actin, whereas it enhances it at low concentrations. This is Profilin-6 from Corylus avellana (European hazel).